The sequence spans 833 residues: Phenylalanine--tRNA ligase beta subunit (833 aa).

The region spanning 42-157 (ADLKGPLAVG…PEYEVGTDAI (116 aa)) is the tRNA-binding domain. Residues 411-485 (SAPHTITIPA…RLEGYENLPS (75 aa)) enclose the B5 domain. Residues Asp-463, Asp-469, Glu-472, and Glu-473 each contribute to the Mg(2+) site. One can recognise an FDX-ACB domain in the interval 739-832 (STFPVATQDV…AAERTGAALR (94 aa)).

It belongs to the phenylalanyl-tRNA synthetase beta subunit family. Type 1 subfamily. Tetramer of two alpha and two beta subunits. Mg(2+) serves as cofactor.

The protein resides in the cytoplasm. The enzyme catalyses tRNA(Phe) + L-phenylalanine + ATP = L-phenylalanyl-tRNA(Phe) + AMP + diphosphate + H(+). This chain is Phenylalanine--tRNA ligase beta subunit, found in Streptomyces avermitilis (strain ATCC 31267 / DSM 46492 / JCM 5070 / NBRC 14893 / NCIMB 12804 / NRRL 8165 / MA-4680).